Reading from the N-terminus, the 926-residue chain is Armadillo repeat-containing protein 5 (926 aa).

Over residues 82–104 (PAPSQAASGSAPSSVASAGSTPG) the composition is skewed to low complexity. The tract at residues 82 to 111 (PAPSQAASGSAPSSVASAGSTPGHAPAAES) is disordered. ARM repeat units follow at residues 139–179 (GACR…NLAM), 181–221 (PESC…NLAD), 223–263 (PQHR…ELSR), 267–306 (RACA…NLCA), 307–354 (QGLV…LCRE), 355–399 (AINR…DTGA), and 401–440 (GKLQ…EERT). S337 is subject to Phosphoserine. Positions 472–516 (WSPERCPMPEPSESVSPTPGQTSMSTPRTLRKPGRIPAATPEEPW) are disordered. Over residues 484–499 (ESVSPTPGQTSMSTPR) the composition is skewed to polar residues. Positions 745–813 (PDLHFVLDSG…LHGCRGCGAA (69 aa)) constitute a BTB domain.

As to quaternary structure, substrate-recognition component of the BCR(ARMC5) E3 ubiquitin ligase complex, at least composed of CUL3, ARMC5 and RBX1. Post-translationally, ubiquitinated by a BCR (BTB-CUL3-RBX1) E3 ubiquitin ligase complex, leading to its degradation. Deubiquitinated by USP7. As to expression, expression is high in the thymus, stomach, bone marrow and lymphatic tissues (including lymph nodes and intestinal wall). Also expressed in the adrenal gland, skin and in brain structures, with noticeable levels found in the cerebellum.

The protein localises to the nucleus. It localises to the chromosome. Its subcellular location is the cytoplasm. The protein operates within protein modification; protein ubiquitination. Substrate-recognition component of a BCR (BTB-CUL3-RBX1) E3 ubiquitin ligase complex that terminates RNA polymerase II (Pol II) transcription in the promoter-proximal region of genes. The BCR(ARMC5) complex provides a quality checkpoint during transcription elongation by driving premature transcription termination of transcripts that are unfavorably configured for transcriptional elongation: the BCR(ARMC5) complex acts by mediating ubiquitination of Pol II subunit POLR2A phosphorylated at 'Ser-5' of the C-terminal domain (CTD), leading to POLR2A degradation. The BCR(ARMC5) complex acts in parallel of the integrator complex and is specific for RNA Pol II originating from the promoter-proximal zone: it does not ubiquitinate elongation-stalled RNA Pol II. The BCR(ARMC5) complex also acts as a regulator of fatty acid desaturation by mediating ubiquitination and degradation of SCAP-free SREBF1 and SREBF2. Involved in fetal development, T-cell function and adrenal gland growth homeostasis. Plays a role in steroidogenesis, modulates steroidogenic enzymes expression and cortisol production. The sequence is that of Armadillo repeat-containing protein 5 from Mus musculus (Mouse).